We begin with the raw amino-acid sequence, 522 residues long: Bifunctional purine biosynthesis protein PurH (522 aa).

The 143-residue stretch at 1–143 (MIRRALISVS…KNHARVAVVV (143 aa)) folds into the MGS-like domain.

This sequence belongs to the PurH family.

The catalysed reaction is (6R)-10-formyltetrahydrofolate + 5-amino-1-(5-phospho-beta-D-ribosyl)imidazole-4-carboxamide = 5-formamido-1-(5-phospho-D-ribosyl)imidazole-4-carboxamide + (6S)-5,6,7,8-tetrahydrofolate. It catalyses the reaction IMP + H2O = 5-formamido-1-(5-phospho-D-ribosyl)imidazole-4-carboxamide. The protein operates within purine metabolism; IMP biosynthesis via de novo pathway; 5-formamido-1-(5-phospho-D-ribosyl)imidazole-4-carboxamide from 5-amino-1-(5-phospho-D-ribosyl)imidazole-4-carboxamide (10-formyl THF route): step 1/1. It functions in the pathway purine metabolism; IMP biosynthesis via de novo pathway; IMP from 5-formamido-1-(5-phospho-D-ribosyl)imidazole-4-carboxamide: step 1/1. This is Bifunctional purine biosynthesis protein PurH from Sorangium cellulosum (strain So ce56) (Polyangium cellulosum (strain So ce56)).